A 197-amino-acid chain; its full sequence is MPAEVHGSPPASLCPCQSVKFRPGLPEMALLTALDDTLPEEAQGPGRRMILLSTPSQSDALRACFERNLYPGIATKEELAQGIDIPEPRVQIWFQNERSCQLRQHRRQSRPWPGRRDPQKGRRKRTAITGSQTALLLRAFEKDRFPGIAAREELARETGLPESRIQIWFQNRRARHRGQSGRAPTQASIRCNAAPIG.

2 DNA-binding regions (homeobox) span residues 46–105 (GRRM…LRQH) and 121–180 (GRRK…RGQS). Residues 101–127 (QLRQHRRQSRPWPGRRDPQKGRRKRTA) form a disordered region.

It belongs to the paired homeobox family. In terms of tissue distribution, expressed in hepatoma Hep3B cells.

It localises to the nucleus. The polypeptide is Double homeobox protein 5 (DUX5) (Homo sapiens (Human)).